A 232-amino-acid polypeptide reads, in one-letter code: Ribose-5-phosphate isomerase A (232 aa).

Substrate is bound by residues 28–31, 83–86, and 96–99; these read TGST, DGAD, and KGGG. Residue Glu105 is the Proton acceptor of the active site. Lys123 serves as a coordination point for substrate.

It belongs to the ribose 5-phosphate isomerase family. Homodimer.

It carries out the reaction aldehydo-D-ribose 5-phosphate = D-ribulose 5-phosphate. Its pathway is carbohydrate degradation; pentose phosphate pathway; D-ribose 5-phosphate from D-ribulose 5-phosphate (non-oxidative stage): step 1/1. Its function is as follows. Catalyzes the reversible conversion of ribose-5-phosphate to ribulose 5-phosphate. The polypeptide is Ribose-5-phosphate isomerase A (Rhizobium etli (strain CIAT 652)).